Consider the following 1285-residue polypeptide: DNA polymerase II large subunit (1285 aa).

Positions 565–586 are disordered; the sequence is TRIGGRMGRPGKSKPREMRPPP.

The protein belongs to the archaeal DNA polymerase II family. In terms of assembly, heterodimer of a large subunit and a small subunit. This protein undergoes a protein self splicing that involves a post-translational excision of the intervening region (intein) followed by peptide ligation.

It catalyses the reaction DNA(n) + a 2'-deoxyribonucleoside 5'-triphosphate = DNA(n+1) + diphosphate. The enzyme catalyses Exonucleolytic cleavage in the 3'- to 5'-direction to yield nucleoside 5'-phosphates.. In terms of biological role, possesses two activities: a DNA synthesis (polymerase) and an exonucleolytic activity that degrades single-stranded DNA in the 3'- to 5'-direction. Has a template-primer preference which is characteristic of a replicative DNA polymerase. This is DNA polymerase II large subunit from Methanoculleus marisnigri (strain ATCC 35101 / DSM 1498 / JR1).